A 292-amino-acid polypeptide reads, in one-letter code: MNNGYLAFPQFDPVIFSIGPVSLHWYGLMYLVGFVFAMWLAVRRANKPGSGWKKEEVENLLYAGFLGVFLGGRIGYVLFYNMPLFLENPLYLFKVWDGGMSFHGGLIGVIVVMLVFAHRTKRHFFQVADFIAPLIPFGLGAGRLGNFINGELWGRVDPNLPWAMLFPGSRSEDIALVAAHPQWQQLLSTYGVLPRHPSQLYELILEGVVLFIILNLFIRKSRPMGAVSGLFLIGYGAFRIIVEFFRQPDQQLGLFGGISMGQILSLPMILAGVIMMIWAYRRRPQQRIREAK.

The next 7 membrane-spanning stretches (helical) occupy residues 21–41 (VSLHWYGLMYLVGFVFAMWLA), 60–80 (LLYAGFLGVFLGGRIGYVLFY), 98–118 (GGMSFHGGLIGVIVVMLVFAH), 124–144 (FFQVADFIAPLIPFGLGAGRL), 198–218 (SQLYELILEGVVLFIILNLFI), 225–245 (GAVSGLFLIGYGAFRIIVEFF), and 258–278 (ISMGQILSLPMILAGVIMMIW). Arginine 143 contacts a 1,2-diacyl-sn-glycero-3-phospho-(1'-sn-glycerol).

The protein belongs to the Lgt family.

It is found in the cell inner membrane. It carries out the reaction L-cysteinyl-[prolipoprotein] + a 1,2-diacyl-sn-glycero-3-phospho-(1'-sn-glycerol) = an S-1,2-diacyl-sn-glyceryl-L-cysteinyl-[prolipoprotein] + sn-glycerol 1-phosphate + H(+). It participates in protein modification; lipoprotein biosynthesis (diacylglyceryl transfer). Functionally, catalyzes the transfer of the diacylglyceryl group from phosphatidylglycerol to the sulfhydryl group of the N-terminal cysteine of a prolipoprotein, the first step in the formation of mature lipoproteins. The chain is Phosphatidylglycerol--prolipoprotein diacylglyceryl transferase from Erwinia tasmaniensis (strain DSM 17950 / CFBP 7177 / CIP 109463 / NCPPB 4357 / Et1/99).